Reading from the N-terminus, the 1841-residue chain is Sucrase-isomaltase, intestinal (1841 aa).

The Cytoplasmic portion of the chain corresponds to 1–12 (MAKKKFSALEIS). Ser7 is modified (phosphoserine; by PKA). The chain crosses the membrane as a helical; Signal-anchor for type II membrane protein span at residues 13 to 32 (LIVLFIIVTAIAIALVTVLA). Over 33 to 1841 (TKVPAVEEIK…LDEPIQITWS (1809 aa)) the chain is Lumenal. Positions 42-81 (KSPTPTSNSTPTSTPTSTSTPTSTSTPSPGKCPPEQGEPI) are disordered. Positions 43–70 (SPTPTSNSTPTSTPTSTSTPTSTSTPSP) are enriched in low complexity. The 50-residue stretch at 71–120 (GKCPPEQGEPINERINCIPEQHPTKAICEERGCCWRPWNNTVIPWCFFAD) folds into the P-type 1 domain. Disulfide bonds link Cys73–Cys104, Cys87–Cys103, and Cys98–Cys116. Asn109 carries N-linked (GlcNAc...) asparagine glycosylation. Residues 120–1013 (DNHGYNAESI…ELQLNPPNAR (894 aa)) are isomaltase. Positions 274 and 398 each coordinate substrate. Residues Tyr401 and Tyr410 each carry the sulfotyrosine modification. Asn464 is a glycosylation site (N-linked (GlcNAc...) asparagine). Asp514 (nucleophile; for isomaltase activity) is an active-site residue. Arg599 is a substrate binding site. Asp615 serves as the catalytic For isomaltase activity. Residues Cys646 and Cys657 are joined by a disulfide bond. His673 contributes to the substrate binding site. 4 N-linked (GlcNAc...) asparagine glycosylation sites follow: Asn758, Asn765, Asn867, and Asn910. The 49-residue stretch at 936 to 984 (RWCRTFSDNEKFTCYPDVGTATEGTCTQRGCLWQPVSGLSNVPPYYFPP) folds into the P-type 2 domain. A sucrase region spans residues 1014–1841 (IKLPSNPIST…LDEPIQITWS (828 aa)). N-linked (GlcNAc...) asparagine glycans are attached at residues Asn1240, Asn1308, Asn1345, Asn1359, and Asn1373. Tyr1387 carries the sulfotyrosine modification. Asp1399 acts as the Nucleophile; for sucrase activity in catalysis. Glu1402 serves as the catalytic For sucrase activity. Asn1485 carries an N-linked (GlcNAc...) asparagine glycan. The Proton donor; for sucrase activity role is filled by Asp1512. N-linked (GlcNAc...) asparagine glycosylation is found at Asn1513, Asn1575, Asn1762, and Asn1829.

Belongs to the glycosyl hydrolase 31 family. As to quaternary structure, the resulting sucrase and isomaltase subunits stay associated with one another in a complex by non-covalent linkages. The precursor is proteolytically cleaved when exposed to pancreatic proteases in the intestinal lumen. In terms of processing, sulfated.

Its subcellular location is the apical cell membrane. The catalysed reaction is Hydrolysis of sucrose and maltose by an alpha-D-glucosidase-type action.. The enzyme catalyses Hydrolysis of (1-&gt;6)-alpha-D-glucosidic linkages in some oligosaccharides produced from starch and glycogen by alpha-amylase, and in isomaltose.. Its function is as follows. Plays an important role in the final stage of carbohydrate digestion. Isomaltase activity is specific for both alpha-1,4- and alpha-1,6-oligosaccharides. This Rattus norvegicus (Rat) protein is Sucrase-isomaltase, intestinal (Si).